We begin with the raw amino-acid sequence, 119 residues long: Large ribosomal subunit protein uL18 (119 aa).

The protein belongs to the universal ribosomal protein uL18 family. Part of the 50S ribosomal subunit; part of the 5S rRNA/L5/L18/L25 subcomplex. Contacts the 5S and 23S rRNAs.

Functionally, this is one of the proteins that bind and probably mediate the attachment of the 5S RNA into the large ribosomal subunit, where it forms part of the central protuberance. This is Large ribosomal subunit protein uL18 from Xylella fastidiosa (strain 9a5c).